A 361-amino-acid polypeptide reads, in one-letter code: Phospho-N-acetylmuramoyl-pentapeptide-transferase (361 aa).

10 consecutive transmembrane segments (helical) span residues 28–48 (LAVL…IKFL), 74–94 (TMGG…LADL), 99–119 (IWIT…DDYA), 135–155 (LLLQ…TIDS), 167–187 (SLSM…IVGA), 203–223 (VPIA…GNLI), 236–256 (TGEL…FLWF), 263–283 (VFMG…ISVI), 288–308 (IVLG…IMQV), and 338–358 (KVVI…LSSL).

Belongs to the glycosyltransferase 4 family. MraY subfamily. Requires Mg(2+) as cofactor.

It is found in the cell inner membrane. It catalyses the reaction UDP-N-acetyl-alpha-D-muramoyl-L-alanyl-gamma-D-glutamyl-meso-2,6-diaminopimeloyl-D-alanyl-D-alanine + di-trans,octa-cis-undecaprenyl phosphate = di-trans,octa-cis-undecaprenyl diphospho-N-acetyl-alpha-D-muramoyl-L-alanyl-D-glutamyl-meso-2,6-diaminopimeloyl-D-alanyl-D-alanine + UMP. The protein operates within cell wall biogenesis; peptidoglycan biosynthesis. Catalyzes the initial step of the lipid cycle reactions in the biosynthesis of the cell wall peptidoglycan: transfers peptidoglycan precursor phospho-MurNAc-pentapeptide from UDP-MurNAc-pentapeptide onto the lipid carrier undecaprenyl phosphate, yielding undecaprenyl-pyrophosphoryl-MurNAc-pentapeptide, known as lipid I. This Rickettsia bellii (strain RML369-C) protein is Phospho-N-acetylmuramoyl-pentapeptide-transferase.